A 437-amino-acid chain; its full sequence is Aspartate aminotransferase, mitochondrial (437 aa).

Positions 72, 167, and 220 each coordinate L-aspartate. An N6-(pyridoxal phosphate)lysine modification is found at lysine 284. Arginine 413 serves as a coordination point for L-aspartate.

Belongs to the class-I pyridoxal-phosphate-dependent aminotransferase family. In terms of assembly, homodimer. It depends on pyridoxal 5'-phosphate as a cofactor.

It is found in the mitochondrion matrix. The catalysed reaction is L-aspartate + 2-oxoglutarate = oxaloacetate + L-glutamate. Its function is as follows. Plays a key role in amino acid metabolism. Important for metabolite exchange between mitochondria and cytosol. In Schizosaccharomyces pombe (strain 972 / ATCC 24843) (Fission yeast), this protein is Aspartate aminotransferase, mitochondrial.